The sequence spans 375 residues: Platelet-derived growth factor receptor-like protein (375 aa).

An N-terminal signal peptide occupies residues 1-21 (MKFWLLLGLLLLHEALEDVAG). Residues 20 to 63 (AGQHSPKNKRPKEQGENRIKPTNKKAKPKIPKVKDRDSTDSTAK) form a disordered region. Residues 40–50 (PTNKKAKPKIP) are compositionally biased toward basic residues. Residues 47–159 (PKIPKVKDRD…GYICRRDEAK (113 aa)) enclose the Ig-like C2-type 1 domain. Cysteines 96 and 143 form a disulfide. The N-linked (GlcNAc...) asparagine glycan is linked to Asn-219. The region spanning 272–375 (PSTTILASSN…TTVATTVEFS (104 aa)) is the Ig-like C2-type 2 domain. Cys-293 and Cys-357 are disulfide-bonded.

As to quaternary structure, forms a complex composed of PDGFRL, TNK2 and GRB2.

The protein resides in the secreted. The sequence is that of Platelet-derived growth factor receptor-like protein (Pdgfrl) from Mus musculus (Mouse).